The chain runs to 879 residues: Band 4.1-like protein 1 (879 aa).

Residues 1 to 88 form a disordered region; sequence MTTETGPDSE…TPSKAQKSPQ (88 aa). The segment covering 17–35 has biased composition (low complexity); the sequence is ETPQQPEAAAAVTTPVTPA. Thr-30 carries the post-translational modification Phosphothreonine. Positions 38-50 are enriched in basic and acidic residues; the sequence is SHPETNSNEKHLT. Phosphoserine is present on Ser-75. Residues 76 to 87 are compositionally biased toward polar residues; sequence ERTTPSKAQKSP. The residue at position 79 (Thr-79) is a Phosphothreonine. The FERM domain maps to 97–378; that stretch reads AICRVTLLDA…EHHTFFRLVS (282 aa). Tyr-343 is modified (phosphotyrosine). Residues Ser-378, Ser-430, Ser-437, Ser-461, and Ser-466 each carry the phosphoserine modification. The tract at residues 381-482 is hydrophilic; it reads PPPKGFLVMG…VRTPTKIKEL (102 aa). The interval 428 to 501 is disordered; the sequence is SRSLDGAEFS…HKQEFLDKPE (74 aa). The span at 444 to 501 shows a compositional bias: basic and acidic residues; the sequence is ENHDAGPEGDKREDDAESGGRRSEAEEGEVRTPTKIKELKPEQETTPRHKQEFLDKPE. Position 475 is a phosphothreonine (Thr-475). The segment at 483 to 541 is spectrin--actin-binding; it reads KPEQETTPRHKQEFLDKPEDVLLKHQASINELKRTLKEPNSKLIHRDRDWDRERRLPSS. Ser-510 bears the Phosphoserine mark. Positions 514 to 538 are enriched in basic and acidic residues; it reads LKRTLKEPNSKLIHRDRDWDRERRL. Positions 514-594 are disordered; sequence LKRTLKEPNS…QDQERDAVFL (81 aa). A phosphoserine mark is found at Ser-540, Ser-541, Ser-544, and Ser-546. At Thr-550 the chain carries Phosphothreonine. Positions 550-577 are enriched in basic and acidic residues; it reads TPEKASERAGLREGSEEKVKPPRPRAPE. A phosphoserine mark is found at Ser-564, Ser-578, Ser-639, Ser-648, Ser-650, Ser-665, Ser-666, Ser-671, Ser-677, and Ser-684. Residues 657 to 696 are disordered; sequence FAQDLKGPSSQEDESGGLEDSPDRGACSTPEMPQFESVKA. Phosphothreonine is present on Thr-685. A phosphoserine mark is found at Ser-721, Ser-782, and Ser-868. The interval 743-879 is C-terminal (CTD); the sequence is PCITTETIST…EERDKKPQES (137 aa).

Interacts with AGAP2. As to expression, highest expression in brain, also present in kidney, olfactory epithelium, retina, sensory ganglia, gastrointestinal tract (only enteric neurons) and lung.

Its subcellular location is the cytoplasm. The protein localises to the cytoskeleton. Functionally, may function to confer stability and plasticity to neuronal membrane via multiple interactions, including the spectrin-actin-based cytoskeleton, integral membrane channels and membrane-associated guanylate kinases. The polypeptide is Band 4.1-like protein 1 (Mus musculus (Mouse)).